The primary structure comprises 139 residues: Cofilin (139 aa).

The region spanning 4 to 135 (GVKVSQECLD…SYDTVLDKVS (132 aa)) is the ADF-H domain.

This sequence belongs to the actin-binding proteins ADF family.

It is found in the cytoplasm. Its subcellular location is the cytoskeleton. The protein localises to the nucleus matrix. Its function is as follows. Controls reversibly actin polymerization and depolymerization in a pH-sensitive manner. It has the ability to bind G- and F-actin in a 1:1 ratio of cofilin to actin. Binding to F-actin is regulated by tropomyosin. It is the major component of intranuclear and cytoplasmic actin rods. Required for accumulation of actin at the cell division site via depolymerizing actin at the cell ends. In association with myosin II has a role in the assembly of the contractile ring via severing actin filaments. Involved in the maintenance of the contractile ring once formed. In association with profilin and capping protein, has a role in the mitotic reorganization of the actin cytoskeleton. This chain is Cofilin (COF1), found in Mycosarcoma maydis (Corn smut fungus).